Here is a 587-residue protein sequence, read N- to C-terminus: Kelch-like protein 3 (587 aa).

The disordered stretch occupies residues Met1–Asn22. Ser10 is subject to Phosphoserine. Residues Cys50–Glu117 form the BTB domain. The BACK domain maps to Cys152 to Glu254. Thr295 carries the phosphothreonine modification. Kelch repeat units lie at residues Val302–Gly347, His348–Asp394, Leu396–Gly441, Lys442–Gly490, Gln491–Gly537, and Leu539–Lys585. Residue Thr375 is modified to Phosphothreonine. A phosphoserine mark is found at Ser376 and Ser433.

It belongs to the KLHL3 family. As to quaternary structure, homodimer. Component of the BCR(KLHL3) E3 ubiquitin ligase complex, at least composed of CUL3 and KLHL3 and RBX1. Interacts with CLDN8. Post-translationally, phosphorylation at Ser-433 by PKA or PKC decreases the interaction with WNK1 and WNK4, leading to inhibit their degradation by the BCR(KLHL3) complex. Phosphorylated at Ser-433 by PKC in response to angiotensin II signaling, decreasing ability to promote degradation of WNK1 and WNK4, leading to activation of Na-Cl cotransporter SLC12A3/NCC. Phosphorylation at Ser-433 is increased by insulin. Dephosphorylated at Ser-433 by calcineurin PPP3CA, promoting degradation of WNK1 and WNK4.

Its subcellular location is the cytoplasm. The protein localises to the cytoskeleton. It localises to the cytosol. It functions in the pathway protein modification; protein ubiquitination. Its function is as follows. Substrate-specific adapter of a BCR (BTB-CUL3-RBX1) E3 ubiquitin ligase complex that acts as a regulator of ion transport in the distal nephron. The BCR(KLHL3) complex acts by mediating ubiquitination and degradation of WNK1 and WNK4, two activators of Na-Cl cotransporter SLC12A3/NCC in distal convoluted tubule cells of kidney, thereby regulating NaCl reabsorption. The BCR(KLHL3) complex also mediates ubiquitination and degradation of WNK3. The BCR(KLHL3) complex also mediates ubiquitination of CLDN8, a tight-junction protein required for paracellular chloride transport in the kidney, leading to its degradation. The polypeptide is Kelch-like protein 3 (KLHL3) (Bos taurus (Bovine)).